Consider the following 391-residue polypeptide: Succinate--CoA ligase [ADP-forming] subunit beta (391 aa).

In terms of domain architecture, ATP-grasp spans 9–248; the sequence is KDILRKFGVA…ISEEDPFEVE (240 aa). ATP-binding positions include K50, 57 to 59, E103, M106, and E111; that span reads GRG. Mg(2+) contacts are provided by N203 and D217. Substrate is bound by residues N268 and 325 to 327; that span reads GIV.

It belongs to the succinate/malate CoA ligase beta subunit family. As to quaternary structure, heterotetramer of two alpha and two beta subunits. Mg(2+) serves as cofactor.

It carries out the reaction succinate + ATP + CoA = succinyl-CoA + ADP + phosphate. The catalysed reaction is GTP + succinate + CoA = succinyl-CoA + GDP + phosphate. It functions in the pathway carbohydrate metabolism; tricarboxylic acid cycle; succinate from succinyl-CoA (ligase route): step 1/1. Functionally, succinyl-CoA synthetase functions in the citric acid cycle (TCA), coupling the hydrolysis of succinyl-CoA to the synthesis of either ATP or GTP and thus represents the only step of substrate-level phosphorylation in the TCA. The beta subunit provides nucleotide specificity of the enzyme and binds the substrate succinate, while the binding sites for coenzyme A and phosphate are found in the alpha subunit. This Chlorobium luteolum (strain DSM 273 / BCRC 81028 / 2530) (Pelodictyon luteolum) protein is Succinate--CoA ligase [ADP-forming] subunit beta.